Here is an 829-residue protein sequence, read N- to C-terminus: Periplasmic nitrate reductase (829 aa).

The tat-type signal signal peptide spans 1 to 30 (MKMTRRAFVKANAAASAAAVAGITLPASAA). The region spanning 41–97 (ITWDKAPCRFCGTGCSVLVGTQNGKVVATQGDPEAPVNKGLNCIKGYFLSKIMYGQD) is the 4Fe-4S Mo/W bis-MGD-type domain. [4Fe-4S] cluster is bound by residues C48, C51, C55, and C83. Mo-bis(molybdopterin guanine dinucleotide) contacts are provided by residues K85, Q152, N177, C181, 214-221 (WGSNMAEM), 245-249 (STYYH), 264-266 (QSD), M374, Q378, N484, 510-511 (SD), K533, D560, and 718-727 (TGRVLEHWHT). F794 contributes to the substrate binding site. Mo-bis(molybdopterin guanine dinucleotide) is bound by residues N802 and K819.

Belongs to the prokaryotic molybdopterin-containing oxidoreductase family. NasA/NapA/NarB subfamily. In terms of assembly, component of the periplasmic nitrate reductase NapAB complex composed of NapA and NapB. Requires [4Fe-4S] cluster as cofactor. Mo-bis(molybdopterin guanine dinucleotide) serves as cofactor. Predicted to be exported by the Tat system. The position of the signal peptide cleavage has not been experimentally proven.

Its subcellular location is the periplasm. It catalyses the reaction 2 Fe(II)-[cytochrome] + nitrate + 2 H(+) = 2 Fe(III)-[cytochrome] + nitrite + H2O. Its function is as follows. Catalytic subunit of the periplasmic nitrate reductase complex NapAB. Receives electrons from NapB and catalyzes the reduction of nitrate to nitrite. The protein is Periplasmic nitrate reductase of Vibrio parahaemolyticus serotype O3:K6 (strain RIMD 2210633).